A 385-amino-acid polypeptide reads, in one-letter code: Linearmycin resistance permease protein LnrN (385 aa).

Transmembrane regions (helical) follow at residues 22-42 (YLIM…MLSG), 198-218 (AAGF…GTIL), 239-259 (IGAG…GILL), 274-294 (AAVI…GLMI), 305-325 (LAFG…YWPI), and 360-380 (DILG…AAGL). The ABC transmembrane type-2 domain occupies 163 to 382 (KTVFAKKHED…AITFAAGLKA (220 aa)).

This sequence belongs to the ABC-2 integral membrane protein family. As to quaternary structure, the complex is composed of two ATP-binding proteins (LnrL) and two transmembrane proteins (LnrM and LnrN).

It localises to the cell membrane. In terms of biological role, required for resistance to linearmycins, a family of antibiotic-specialized metabolites produced by some streptomycetes. Part of the ABC transporter complex LnrLMN that probably facilitates linearmycin removal from the membrane. Responsible for the translocation of the substrate across the membrane. Also mediates KinC-dependent biofilm morphology. This chain is Linearmycin resistance permease protein LnrN, found in Bacillus subtilis (strain 168).